We begin with the raw amino-acid sequence, 700 residues long: Elongation factor G (700 aa).

Positions 10 to 286 constitute a tr-type G domain; it reads NKVRNIGIMA…AVIDYLPNPL (277 aa). GTP is bound by residues 19-26, 83-87, and 137-140; these read AHIDAGKT, DTPGH, and NKMD.

This sequence belongs to the TRAFAC class translation factor GTPase superfamily. Classic translation factor GTPase family. EF-G/EF-2 subfamily.

It localises to the cytoplasm. Its function is as follows. Catalyzes the GTP-dependent ribosomal translocation step during translation elongation. During this step, the ribosome changes from the pre-translocational (PRE) to the post-translocational (POST) state as the newly formed A-site-bound peptidyl-tRNA and P-site-bound deacylated tRNA move to the P and E sites, respectively. Catalyzes the coordinated movement of the two tRNA molecules, the mRNA and conformational changes in the ribosome. In Rhodococcus jostii (strain RHA1), this protein is Elongation factor G.